Reading from the N-terminus, the 274-residue chain is 4-diphosphocytidyl-2-C-methyl-D-erythritol kinase (274 aa).

The active site involves Lys8. 94-104 (PSGAGLGGGSA) serves as a coordination point for ATP. Asp136 is a catalytic residue.

Belongs to the GHMP kinase family. IspE subfamily.

The catalysed reaction is 4-CDP-2-C-methyl-D-erythritol + ATP = 4-CDP-2-C-methyl-D-erythritol 2-phosphate + ADP + H(+). It functions in the pathway isoprenoid biosynthesis; isopentenyl diphosphate biosynthesis via DXP pathway; isopentenyl diphosphate from 1-deoxy-D-xylulose 5-phosphate: step 3/6. Catalyzes the phosphorylation of the position 2 hydroxy group of 4-diphosphocytidyl-2C-methyl-D-erythritol. The polypeptide is 4-diphosphocytidyl-2-C-methyl-D-erythritol kinase (Bacteroides fragilis (strain YCH46)).